A 62-amino-acid polypeptide reads, in one-letter code: Large ribosomal subunit protein uL30 (62 aa).

It belongs to the universal ribosomal protein uL30 family. As to quaternary structure, part of the 50S ribosomal subunit.

The sequence is that of Large ribosomal subunit protein uL30 from Shewanella frigidimarina (strain NCIMB 400).